The sequence spans 30 residues: Matrix Gla protein (30 aa).

Serine 2, serine 3, and serine 5 each carry phosphoserine.

It belongs to the osteocalcin/matrix Gla protein family. Post-translationally, requires vitamin K-dependent gamma-carboxylation for its function.

The protein localises to the secreted. In terms of biological role, associates with the organic matrix of calcified cartilage. The polypeptide is Matrix Gla protein (mgp) (Prionace glauca (Blue shark)).